Consider the following 755-residue polypeptide: PWWP domain-containing protein 2A (755 aa).

Over residues 1–15 the composition is skewed to low complexity; the sequence is MAAVAAEAAATAASP. The interval 1 to 153 is disordered; sequence MAAVAAEAAA…VPPAGGDSTV (153 aa). Pro residues predominate over residues 64 to 76; sequence DEPPLPPPPPPPG. Ser-81, Ser-102, Ser-116, and Ser-119 each carry phosphoserine. A compositionally biased stretch (pro residues) spans 112–126; it reads ELPPSPASPPEQPPA. Positions 148–373 are interaction with HDAC1 and MTA1; sequence GGDSTVSQLI…KLKTDHKVDG (226 aa). Residue Lys-208 forms a Glycyl lysine isopeptide (Lys-Gly) (interchain with G-Cter in SUMO2) linkage. Disordered stretches follow at residues 282 to 301, 334 to 384, 400 to 562, and 578 to 626; these read YNQS…KRKM, KEIR…KRNA, KVSA…GSKN, and SSAS…SKEE. Residues 292–301 are compositionally biased toward basic residues; it reads RKIKRPKRKM. Basic and acidic residues-rich tracts occupy residues 346–356 and 368–381; these read SKYEDKKRRNE and DHKV…ESQK. A compositionally biased stretch (polar residues) spans 403–421; that stretch reads AQANTSKAQLSTKKVLQSK. Positions 422–444 are enriched in basic and acidic residues; sequence NMDHAKAREVLKIAKEKAQKKQN. Residues 423-574 form an interaction with the H2A.Z/H2AZ1 region; the sequence is MDHAKAREVL…SVYMTLNQKK (152 aa). Positions 508–527 are enriched in polar residues; the sequence is SRCTSTRSAGEAPSENQSPS. Residues 593-603 show a composition bias toward low complexity; sequence SSNSECSSSES. Residues 655-715 enclose the PWWP domain; that stretch reads VGDIVWAKIY…LSQLSPFLEN (61 aa).

In terms of assembly, component of a MTA1-specific subcomplex of the NuRD complex (M1HR), composed of PWWP2A, MTA1/2, HDAC1/2, and RBBP4/7 but does not contain CHD4 and MBD3. Interacts with MTA1; the interaction mediates the association of PWWP2A with the M1HR complex. Interacts with H2A.Z/H2AZ1. Interacts (via PWWP domain) with histone H3 trimethylated at 'Lys-36' (H3K36me3). Does not interact with CHD4 and MBD3. Interacts with MTA1 and with HDAC1 in a MTA1-dependent manner. Does not interact with CHD4 and MBD3.

The protein localises to the nucleus. Its function is as follows. Chromatin-binding protein that acts as an adapter between distinct nucleosome components (H3K36me3 or H2A.Z) and chromatin-modifying complexes, contributing to the regulation of the levels of histone acetylation at actively transcribed genes. Competes with CHD4 and MBD3 for interaction with MTA1 to form a NuRD subcomplex, preventing the formation of full NuRD complex (containing CHD4 and MBD3), leading to recruitment of HDACs to gene promoters resulting in turn in the deacetylation of nearby H3K27 and H2A.Z. Plays a role in facilitating transcriptional elongation and repression of spurious transcription initiation through regulation of histone acetylation. Essential for proper mitosis progression. This chain is PWWP domain-containing protein 2A (PWWP2A), found in Homo sapiens (Human).